Reading from the N-terminus, the 97-residue chain is MSDINVEVVYALPDRQYLRTVKLAQGSTVEQAIVASGLLTLRNDIDLQKNKLGVYSRPVKLTDILEEGDRVEIYRPLLADPKEMRRKRAERAKNNAQ.

Belongs to the UPF0125 (RnfH) family.

This is UPF0125 protein plu3376 from Photorhabdus laumondii subsp. laumondii (strain DSM 15139 / CIP 105565 / TT01) (Photorhabdus luminescens subsp. laumondii).